We begin with the raw amino-acid sequence, 284 residues long: Isopentenyl-diphosphate delta-isomerase (284 aa).

Lysine 77 contributes to the substrate binding site. Positions 81 and 92 each coordinate Mg(2+). In terms of domain architecture, Nudix hydrolase spans 90–256 (LLHRAFSVFL…SLVFTPWFKL (167 aa)). Substrate is bound by residues arginine 111 and lysine 115. Residue cysteine 127 is part of the active site. Serine 128 serves as a coordination point for substrate. A Nudix box motif is present at residues 128–172 (SHPLCVPSELGVDSSLEGSKDVNNLTNAVKGAKVAAQRKLEHELG). Residues glutamate 204 and glutamate 206 each coordinate Mg(2+). Glutamate 206 is an active-site residue.

Belongs to the IPP isomerase type 1 family. Mg(2+) serves as cofactor.

The protein localises to the cytoplasm. It catalyses the reaction isopentenyl diphosphate = dimethylallyl diphosphate. It participates in isoprenoid biosynthesis; dimethylallyl diphosphate biosynthesis; dimethylallyl diphosphate from isopentenyl diphosphate: step 1/1. Its function is as follows. Isopentenyl-diphosphate delta-isomerase; part of the second module of ergosterol biosynthesis pathway that includes the middle steps of the pathway. IDI1 catalyzes the 1,3-allylic rearrangement of isopentenyl (IPP) to its highly electrophilic allylic isomer, dimethylallyl diphosphate (DMAPP). The second module is carried out in the vacuole and involves the formation of farnesyl diphosphate, which is also an important intermediate in the biosynthesis of ubiquinone, dolichol, heme and prenylated proteins. Activity by the mevalonate kinase ERG12 first converts mevalonate into 5-phosphomevalonate. 5-phosphomevalonate is then further converted to 5-diphosphomevalonate by the phosphomevalonate kinase ERG8. The diphosphomevalonate decarboxylase MVD then produces isopentenyl diphosphate. The isopentenyl-diphosphate delta-isomerase IDI1 then catalyzes the 1,3-allylic rearrangement of the homoallylic substrate isopentenyl (IPP) to its highly electrophilic allylic isomer, dimethylallyl diphosphate (DMAPP). Finally the farnesyl diphosphate synthase ERG20 catalyzes the sequential condensation of isopentenyl pyrophosphate with dimethylallyl pyrophosphate, and then with the resultant geranylpyrophosphate to the ultimate product farnesyl pyrophosphate. The sequence is that of Isopentenyl-diphosphate delta-isomerase from Candida albicans (strain SC5314 / ATCC MYA-2876) (Yeast).